A 127-amino-acid polypeptide reads, in one-letter code: Glycine cleavage system H protein (127 aa).

Positions 22–104 (KARIGITHFA…YEKAWMIVVE (83 aa)) constitute a Lipoyl-binding domain. At lysine 63 the chain carries N6-lipoyllysine.

This sequence belongs to the GcvH family. As to quaternary structure, the glycine cleavage system is composed of four proteins: P, T, L and H. The cofactor is (R)-lipoate.

The glycine cleavage system catalyzes the degradation of glycine. The H protein shuttles the methylamine group of glycine from the P protein to the T protein. Its function is as follows. Is also involved in protein lipoylation via its role as an octanoyl/lipoyl carrier protein intermediate. This is Glycine cleavage system H protein from Bacillus velezensis (strain DSM 23117 / BGSC 10A6 / LMG 26770 / FZB42) (Bacillus amyloliquefaciens subsp. plantarum).